Consider the following 106-residue polypeptide: uncharacterized protein (106 aa).

The protein localises to the mitochondrion. This is an uncharacterized protein from Arabidopsis thaliana (Mouse-ear cress).